The sequence spans 731 residues: Alpha-1,4-glucan:maltose-1-phosphate maltosyltransferase (731 aa).

Residues 1–10 (MEAQHNETEA) show a composition bias toward basic and acidic residues. The interval 1–31 (MEAQHNETEAAGKPAAKKTTRTRKPRASKQA) is disordered. A compositionally biased stretch (basic residues) spans 15-27 (AAKKTTRTRKPRA). The alpha-maltose 1-phosphate site is built by Lys-321, Gln-381, and Asp-416. Catalysis depends on Asp-451, which acts as the Nucleophile. Residue Asn-452 participates in alpha-maltose 1-phosphate binding. Glu-480 (proton donor) is an active-site residue. Residue 590-591 (KF) coordinates alpha-maltose 1-phosphate.

It belongs to the glycosyl hydrolase 13 family. GlgE subfamily. Homodimer.

The enzyme catalyses alpha-maltose 1-phosphate + [(1-&gt;4)-alpha-D-glucosyl](n) = [(1-&gt;4)-alpha-D-glucosyl](n+2) + phosphate. In terms of biological role, maltosyltransferase that uses maltose 1-phosphate (M1P) as the sugar donor to elongate linear or branched alpha-(1-&gt;4)-glucans. Is involved in a branched alpha-glucan biosynthetic pathway from trehalose, together with TreS, Mak and GlgB. The sequence is that of Alpha-1,4-glucan:maltose-1-phosphate maltosyltransferase from Bifidobacterium animalis subsp. lactis (strain Bl-04 / DGCC2908 / RB 4825 / SD5219).